The following is a 287-amino-acid chain: Aquaporin PIP1-2 (287 aa).

The segment at 1-37 (MEGKEEDVRLGANKFTERQPIGTAAQSQDKDYKEPPP) is disordered. Residues 1–55 (MEGKEEDVRLGANKFTERQPIGTAAQSQDKDYKEPPPAPLFEPGELSSWSFYRAG) are Cytoplasmic-facing. The chain crosses the membrane as a helical span at residues 56-76 (IAEFVATFLFLYITILTVMGV). Topologically, residues 77–89 (VKSSTKCSTVGIQ) are extracellular. The chain crosses the membrane as a helical span at residues 90–110 (GIAWAFGGMIFALVYCTAGIS). Residues 111–133 (GGHINPAVTFGLFLARKLSLTRA) are Cytoplasmic-facing. The NPA 1 motif lies at 115–117 (NPA). The chain crosses the membrane as a helical span at residues 134–154 (LFYMVMQCLGAICGAGVVKGF). Over 155–175 (QKGLYENNGGGANVVAPGYTK) the chain is Extracellular. The helical transmembrane segment at 176–196 (GDGLGAEIVGTFILVYTVFSA) threads the bilayer. The Cytoplasmic segment spans residues 197–209 (TDAKRSARDSHVP). The helical transmembrane segment at 210-230 (ILAPLPIGFAVFLVHLATIPI) threads the bilayer. At 231-257 (TGTGINPARSLGAAIIYNKGHAWDDHW) the chain is on the extracellular side. An NPA 2 motif is present at residues 236-238 (NPA). A helical membrane pass occupies residues 258 to 278 (IFWVGPFIGAALAALYHQVVI). Residues 279 to 287 (RAIPFKSRS) are Cytoplasmic-facing.

The protein belongs to the MIP/aquaporin (TC 1.A.8) family. PIP (TC 1.A.8.11) subfamily. In terms of tissue distribution, barely detectable in roots, leaves and fruits.

The protein resides in the cell membrane. Water channel required to facilitate the transport of water across cell membrane; mercury-insensitive. Contributes to the tolerance to multiple abiotic stresses including salt (NaCl), cold and water deprivation, by modulating cytosolic K(+)/Na(+) ratio, maintaining osmotic balance, and reducing membrane injury (e.g. oxidative injury). This is Aquaporin PIP1-2 from Musa acuminata subsp. malaccensis (Wild banana).